Here is a 118-residue protein sequence, read N- to C-terminus: Large ribosomal subunit protein bL20 (118 aa).

Belongs to the bacterial ribosomal protein bL20 family.

Binds directly to 23S ribosomal RNA and is necessary for the in vitro assembly process of the 50S ribosomal subunit. It is not involved in the protein synthesizing functions of that subunit. The sequence is that of Large ribosomal subunit protein bL20 from Oceanobacillus iheyensis (strain DSM 14371 / CIP 107618 / JCM 11309 / KCTC 3954 / HTE831).